Reading from the N-terminus, the 267-residue chain is Sorbitol-6-phosphate 2-dehydrogenase (267 aa).

NAD(+) is bound at residue 9–38 (DNVIIVTGGASGIGLAIVDELLSQGAHVQM). Serine 147 serves as a coordination point for substrate. Tyrosine 160 serves as the catalytic Proton acceptor.

It belongs to the short-chain dehydrogenases/reductases (SDR) family. In terms of assembly, homotetramer.

The catalysed reaction is D-sorbitol 6-phosphate + NAD(+) = beta-D-fructose 6-phosphate + NADH + H(+). It participates in carbohydrate metabolism; D-sorbitol degradation; D-fructose 6-phosphate from D-sorbitol 6-phosphate: step 1/1. In Klebsiella pneumoniae, this protein is Sorbitol-6-phosphate 2-dehydrogenase (sorD).